The sequence spans 225 residues: Triosephosphate isomerase (225 aa).

9-11 (NMK) contributes to the substrate binding site. The active-site Electrophile is the H93. E141 (proton acceptor) is an active-site residue. Substrate is bound by residues I146, G181, and 202 to 203 (AS).

Belongs to the triosephosphate isomerase family. Homotetramer; dimer of dimers.

Its subcellular location is the cytoplasm. It catalyses the reaction D-glyceraldehyde 3-phosphate = dihydroxyacetone phosphate. It functions in the pathway carbohydrate biosynthesis; gluconeogenesis. Its pathway is carbohydrate degradation; glycolysis; D-glyceraldehyde 3-phosphate from glycerone phosphate: step 1/1. Involved in the gluconeogenesis. Catalyzes stereospecifically the conversion of dihydroxyacetone phosphate (DHAP) to D-glyceraldehyde-3-phosphate (G3P). In Caldivirga maquilingensis (strain ATCC 700844 / DSM 13496 / JCM 10307 / IC-167), this protein is Triosephosphate isomerase.